Consider the following 560-residue polypeptide: Arginine--tRNA ligase (560 aa).

The short motif at 122-132 is the 'HIGH' region element; the sequence is ANPNGPLHVGH.

It belongs to the class-I aminoacyl-tRNA synthetase family.

The protein localises to the cytoplasm. It catalyses the reaction tRNA(Arg) + L-arginine + ATP = L-arginyl-tRNA(Arg) + AMP + diphosphate. The polypeptide is Arginine--tRNA ligase (Methanosphaera stadtmanae (strain ATCC 43021 / DSM 3091 / JCM 11832 / MCB-3)).